The primary structure comprises 832 residues: MFRWSCAHRLSRSLCQTRFLSTDPLLDQLKICISEDQVFQLVGKNKARLSVTHVGHAINLLWKFQKEKPRMLRTIDQVRGHPEFIALRILAENKIEFMEDNALVEILYNILRFSVEPHDSLVQQLVMEGWRRLERFNLKEISKFAVCLGEQHMHMSPLMGHIASIVDGILDDVQDARILSSLMVNIHGVITPMLRDRLVDKADSLMDTLDVSHFNHPRRIVQFLRNMKHTYRPLLEKCNNAFLQNIGQMDPENLSIIIGLYQSLQYNNSEFRLMARNRLIEMVDQCNNVASYTKLFAALGPMAGQETREKLEEGILTMVDGMNPNQLLAVLGTMEEMECRNTLLIARIASLLQKYLGIYRPVELARITQAIVNLRCQTPELFSMLQKILERNLKSSFIPGDVAMLARVISSLPAARVDEEVFSKVDAILPQCSLSDLSSLALAIVKWVRTEQPSRYSTSGGLGNLLHKLNTCGHERITKIDKIDLFLEELKYITGDWLEEVLLKDAISTCERLIDQITWKNLPEFALFITRTNYLCAPVLNKIASVATEDITKIHYNATYAILLPFVVLNYEPPNGEAFFDACIQHVLPHLNSLDPHLVVLLAYSLALAEYFPEELIKAVFNIDFLGRLDAQLETFSSTLNLRIRLRLMELNRAVCLECPEFQIPWFHDRYCKQLQHRANAGISSVQRQIHQLLGEILGGINYAKVSVMTPYYHTIDFECILDKNKKPILYLDQNVLSADLSKVQWGNGGQLQETKSLPPGAQRVAIEFLDSKAFSKNSSNIKGEYMMKKRHLEILGYHVLQISSLEWNSMELSTKDAWMDYLRKRIFTDDL.

Residues 765-825 (VAIEFLDSKA…KDAWMDYLRK (61 aa)) form the RAP domain.

It belongs to the FAST kinase family.

The protein resides in the mitochondrion. In terms of biological role, may regulate the stability of some mitochondrial mRNA species. The chain is FAST kinase domain-containing protein 1, mitochondrial (fastkd1) from Xenopus laevis (African clawed frog).